We begin with the raw amino-acid sequence, 601 residues long: Replication protein A 70 kDa DNA-binding subunit (601 aa).

The disordered stretch occupies residues 107–172 (MPGKIGDPTP…NTPGGSSKVV (66 aa)). Low complexity predominate over residues 124–135 (APSTAPAPTARP). Polar residues predominate over residues 137–153 (QPQNGSDGSTYRPSAQS). The segment at residues 184 to 268 (WTIRARVTNK…LKNDYEMTLN (85 aa)) is a DNA-binding region (OB). Residue S370 is modified to Phosphoserine. The C4-type zinc finger occupies 466 to 488 (CPSKDCNKKVVDQQNGMFRCEKC).

The protein belongs to the replication factor A protein 1 family. As to quaternary structure, component of the heterotrimeric canonical replication protein A complex (RPA).

The protein resides in the nucleus. It is found in the PML body. In terms of biological role, as part of the heterotrimeric replication protein A complex (RPA/RP-A), binds and stabilizes single-stranded DNA intermediates, that form during DNA replication or upon DNA stress. It prevents their reannealing and in parallel, recruits and activates different proteins and complexes involved in DNA metabolism. Thereby, it plays an essential role both in DNA replication and the cellular response to DNA damage. The chain is Replication protein A 70 kDa DNA-binding subunit (rpa1) from Danio rerio (Zebrafish).